Consider the following 565-residue polypeptide: Sensor histidine kinase YpdA (565 aa).

Over 1 to 3 (MHE) the chain is Cytoplasmic. Residues 4–24 (IFNMLLAVFDRAALMLICLFF) form a helical membrane-spanning segment. The Periplasmic portion of the chain corresponds to 25–45 (LIRIRLFRELLHKSAHSPKEL). The chain crosses the membrane as a helical span at residues 46-66 (LAVTAIFSLFALFSTWSGVPV). At 67–74 (EGSLVNVR) the chain is on the cytoplasmic side. The chain crosses the membrane as a helical span at residues 75–95 (IIAVMSGGILFGPWVGIITGV). Residues 96–107 (IAGIHRYLIDIG) are Periplasmic-facing. Residues 108 to 128 (GVTAIPCFITSILAGCISGWI) traverse the membrane as a helical segment. Topologically, residues 129 to 139 (NLKIPKAQRWR) are cytoplasmic. Residues 140–160 (VGILGGMLCETLTMILVIVWA) form a helical membrane-spanning segment. Topologically, residues 161–172 (PTTALGIDIVSK) are periplasmic. Residues 173–193 (IGIPMILGSVCIGFIVLLVQS) form a helical membrane-spanning segment. The Cytoplasmic segment spans residues 194–565 (VEGEKEASAA…PVASQATLLL (372 aa)). The 120-residue stretch at 223 to 342 (VNSESLRKVC…AVGLSQIIST (120 aa)) folds into the GAF domain. The Histidine kinase domain occupies 343-554 (QLEVSRAEQL…EIAFYIPNQR (212 aa)). The residue at position 371 (His371) is a Phosphohistidine; by autocatalysis.

In terms of assembly, interacts with BtsT and YhjX. Autophosphorylated.

It is found in the cell inner membrane. The catalysed reaction is ATP + protein L-histidine = ADP + protein N-phospho-L-histidine.. Its function is as follows. Member of the two-component regulatory system YpdA/YpdB, which is part of a nutrient-sensing regulatory network composed of YpdA/YpdB, the high-affinity pyruvate signaling system BtsS/BtsR and their respective target proteins, YhjX and BtsT. YpdA activates YpdB by phosphorylation in response to high concentrations of extracellular pyruvate. Activation of the YpdA/YpdB signaling cascade also promotes BtsS/BtsR-mediated btsT expression. The polypeptide is Sensor histidine kinase YpdA (ypdA) (Escherichia coli (strain K12)).